The primary structure comprises 304 residues: Dihydroorotate dehydrogenase B (NAD(+)), catalytic subunit (304 aa).

Residues S21 and 45 to 46 contribute to the FMN site; that span reads KA. Residues K45 and 69-73 each bind substrate; that span reads NAIGL. Positions 99 and 127 each coordinate FMN. N127 is a binding site for substrate. C130 acts as the Nucleophile in catalysis. K165 and I191 together coordinate FMN. Position 192–193 (192–193) interacts with substrate; sequence NT. FMN is bound by residues G217, 243–244, and 265–266; these read GG and GT.

It belongs to the dihydroorotate dehydrogenase family. Type 1 subfamily. As to quaternary structure, heterotetramer of 2 PyrK and 2 PyrD type B subunits. The cofactor is FMN.

Its subcellular location is the cytoplasm. The enzyme catalyses (S)-dihydroorotate + NAD(+) = orotate + NADH + H(+). It functions in the pathway pyrimidine metabolism; UMP biosynthesis via de novo pathway; orotate from (S)-dihydroorotate (NAD(+) route): step 1/1. Functionally, catalyzes the conversion of dihydroorotate to orotate with NAD(+) as electron acceptor. The chain is Dihydroorotate dehydrogenase B (NAD(+)), catalytic subunit (pyrD) from Listeria innocua serovar 6a (strain ATCC BAA-680 / CLIP 11262).